The primary structure comprises 248 residues: Tetraspanin-16 (248 aa).

At 1–7 (MSEIRTG) the chain is on the cytoplasmic side. Residues 8 to 28 (FLTMATIILICIGLTMTGTGL) form a helical membrane-spanning segment. Residues 29–44 (YYRKTVSKCIRETDGS) lie on the Extracellular side of the membrane. The helical transmembrane segment at 45 to 65 (FVVIGLLLLVIPQFALYAICC) threads the bilayer. Over 66 to 69 (HSKR) the chain is Cytoplasmic. Residues 70-90 (MFTIYIYAMIFVSIVLGGYSL) form a helical membrane-spanning segment. Residues 91–208 (KCFIYNTTFG…MSILKAIVHQ (118 aa)) lie on the Extracellular side of the membrane. Asn-96 and Asn-141 each carry an N-linked (GlcNAc...) asparagine glycan. A helical transmembrane segment spans residues 209–229 (WKYLSMFSYPALFLVCLSLAI). Residues 230-248 (SRSIMDTFDEPDDYRGYYS) are Cytoplasmic-facing.

The protein belongs to the tetraspanin (TM4SF) family.

It is found in the membrane. Its function is as follows. May be involved in the regulation of cell differentiation. The polypeptide is Tetraspanin-16 (TET16) (Arabidopsis thaliana (Mouse-ear cress)).